Reading from the N-terminus, the 309-residue chain is WD repeat domain phosphoinositide-interacting protein 4 (309 aa).

A WD 1 repeat occupies 4–42 (QPLRGVTSLHFNQDQSCFCCAMETGVRIYNVEPLMEKGH). A L/FRRG motif motif is present at residues 180 to 183 (LRRG). A WD 2 repeat occupies 184 to 223 (TDPATLYCINFSHDSSFLCASSDKGTVHIFALKDTRLNRR).

This sequence belongs to the WD repeat PROPPIN family. In terms of assembly, interacts with WIPI1. Interacts with WIPI2. Interacts with ATG2A and ATG2B. Interacts with ULK1. May interact with the PRKAA1, PRKAA2, PRKAB1 and PRKAG1 subunits of the AMPK kinase. May interact with NUDC.

The protein resides in the preautophagosomal structure. It is found in the cytoplasm. Component of the autophagy machinery that controls the major intracellular degradation process by which cytoplasmic materials are packaged into autophagosomes and delivered to lysosomes for degradation. Binds phosphatidylinositol 3-phosphate (PtdIns3P). Activated by the STK11/AMPK signaling pathway upon starvation, WDR45 is involved in autophagosome assembly downstream of WIPI2, regulating the size of forming autophagosomes. Together with WIPI1, promotes ATG2 (ATG2A or ATG2B)-mediated lipid transfer by enhancing ATG2-association with phosphatidylinositol 3-monophosphate (PI3P)-containing membranes. Probably recruited to membranes through its PtdIns3P activity. This chain is WD repeat domain phosphoinositide-interacting protein 4 (Wdr45), found in Rattus norvegicus (Rat).